Reading from the N-terminus, the 97-residue chain is Aspartyl/glutamyl-tRNA(Asn/Gln) amidotransferase subunit C (97 aa).

It belongs to the GatC family. In terms of assembly, heterotrimer of A, B and C subunits.

It catalyses the reaction L-glutamyl-tRNA(Gln) + L-glutamine + ATP + H2O = L-glutaminyl-tRNA(Gln) + L-glutamate + ADP + phosphate + H(+). The catalysed reaction is L-aspartyl-tRNA(Asn) + L-glutamine + ATP + H2O = L-asparaginyl-tRNA(Asn) + L-glutamate + ADP + phosphate + 2 H(+). Allows the formation of correctly charged Asn-tRNA(Asn) or Gln-tRNA(Gln) through the transamidation of misacylated Asp-tRNA(Asn) or Glu-tRNA(Gln) in organisms which lack either or both of asparaginyl-tRNA or glutaminyl-tRNA synthetases. The reaction takes place in the presence of glutamine and ATP through an activated phospho-Asp-tRNA(Asn) or phospho-Glu-tRNA(Gln). The polypeptide is Aspartyl/glutamyl-tRNA(Asn/Gln) amidotransferase subunit C (Prochlorococcus marinus (strain MIT 9303)).